Here is a 365-residue protein sequence, read N- to C-terminus: tRNA/tmRNA (uracil-C(5))-methyltransferase (365 aa).

Positions 189, 217, 222, 238, and 298 each coordinate S-adenosyl-L-methionine. Catalysis depends on C323, which acts as the Nucleophile. E357 (proton acceptor) is an active-site residue.

It belongs to the class I-like SAM-binding methyltransferase superfamily. RNA M5U methyltransferase family. TrmA subfamily.

It catalyses the reaction uridine(54) in tRNA + S-adenosyl-L-methionine = 5-methyluridine(54) in tRNA + S-adenosyl-L-homocysteine + H(+). It carries out the reaction uridine(341) in tmRNA + S-adenosyl-L-methionine = 5-methyluridine(341) in tmRNA + S-adenosyl-L-homocysteine + H(+). Functionally, dual-specificity methyltransferase that catalyzes the formation of 5-methyluridine at position 54 (m5U54) in all tRNAs, and that of position 341 (m5U341) in tmRNA (transfer-mRNA). The chain is tRNA/tmRNA (uracil-C(5))-methyltransferase from Pasteurella multocida (strain Pm70).